The sequence spans 149 residues: 3-dehydroquinate dehydratase (149 aa).

Catalysis depends on Y26, which acts as the Proton acceptor. Positions 77, 83, and 90 each coordinate substrate. H103 acts as the Proton donor in catalysis. Residues 104–105 (LS) and R114 each bind substrate.

Belongs to the type-II 3-dehydroquinase family. Homododecamer.

The catalysed reaction is 3-dehydroquinate = 3-dehydroshikimate + H2O. It participates in metabolic intermediate biosynthesis; chorismate biosynthesis; chorismate from D-erythrose 4-phosphate and phosphoenolpyruvate: step 3/7. In terms of biological role, catalyzes a trans-dehydration via an enolate intermediate. In Haemophilus influenzae (strain PittGG), this protein is 3-dehydroquinate dehydratase.